Consider the following 471-residue polypeptide: Glutamate--tRNA ligase (471 aa).

A 'HIGH' region motif is present at residues 9–19 (PSPTGYLHVGG). Residues cysteine 98, cysteine 100, cysteine 125, and histidine 127 each coordinate Zn(2+). Positions 237-241 (KLSKR) match the 'KMSKS' region motif. Position 240 (lysine 240) interacts with ATP.

This sequence belongs to the class-I aminoacyl-tRNA synthetase family. Glutamate--tRNA ligase type 1 subfamily. In terms of assembly, monomer. The cofactor is Zn(2+).

Its subcellular location is the cytoplasm. The catalysed reaction is tRNA(Glu) + L-glutamate + ATP = L-glutamyl-tRNA(Glu) + AMP + diphosphate. Functionally, catalyzes the attachment of glutamate to tRNA(Glu) in a two-step reaction: glutamate is first activated by ATP to form Glu-AMP and then transferred to the acceptor end of tRNA(Glu). The sequence is that of Glutamate--tRNA ligase from Escherichia coli O6:K15:H31 (strain 536 / UPEC).